The sequence spans 195 residues: Protein GrpE (195 aa).

It belongs to the GrpE family. As to quaternary structure, homodimer.

The protein localises to the cytoplasm. In terms of biological role, participates actively in the response to hyperosmotic and heat shock by preventing the aggregation of stress-denatured proteins, in association with DnaK and GrpE. It is the nucleotide exchange factor for DnaK and may function as a thermosensor. Unfolded proteins bind initially to DnaJ; upon interaction with the DnaJ-bound protein, DnaK hydrolyzes its bound ATP, resulting in the formation of a stable complex. GrpE releases ADP from DnaK; ATP binding to DnaK triggers the release of the substrate protein, thus completing the reaction cycle. Several rounds of ATP-dependent interactions between DnaJ, DnaK and GrpE are required for fully efficient folding. The polypeptide is Protein GrpE (Francisella tularensis subsp. holarctica (strain OSU18)).